The following is a 489-amino-acid chain: GTPase Der (489 aa).

2 consecutive EngA-type G domains span residues Pro-3 to Val-166 and Ile-201 to Thr-374. Residues Gly-9–Ser-16, Asp-56–Ile-60, Asn-118–Asp-121, Gly-207–Ser-214, Asp-254–Val-258, and Asn-319–Asp-322 each bind GTP. Positions Lys-375–Thr-459 constitute a KH-like domain.

It belongs to the TRAFAC class TrmE-Era-EngA-EngB-Septin-like GTPase superfamily. EngA (Der) GTPase family. In terms of assembly, associates with the 50S ribosomal subunit.

Functionally, GTPase that plays an essential role in the late steps of ribosome biogenesis. The protein is GTPase Der of Psychromonas ingrahamii (strain DSM 17664 / CCUG 51855 / 37).